The sequence spans 607 residues: Elongation factor 4 (607 aa).

Positions 11–193 constitute a tr-type G domain; sequence EKIRNFSIIA…QIVEKVPAPQ (183 aa). Residues 23–28 and 140–143 each bind GTP; these read DHGKST and NKID.

This sequence belongs to the TRAFAC class translation factor GTPase superfamily. Classic translation factor GTPase family. LepA subfamily.

It is found in the cell membrane. The enzyme catalyses GTP + H2O = GDP + phosphate + H(+). In terms of biological role, required for accurate and efficient protein synthesis under certain stress conditions. May act as a fidelity factor of the translation reaction, by catalyzing a one-codon backward translocation of tRNAs on improperly translocated ribosomes. Back-translocation proceeds from a post-translocation (POST) complex to a pre-translocation (PRE) complex, thus giving elongation factor G a second chance to translocate the tRNAs correctly. Binds to ribosomes in a GTP-dependent manner. The sequence is that of Elongation factor 4 from Lactococcus lactis subsp. cremoris (strain MG1363).